The following is an 83-amino-acid chain: MFIIDDLFVSPFFSLLDILQTMALDEMYDTKSIRDDIKENQLLYEVGERSDEEYQQRKQALESQLEMAEQVQEQMRDRMEVKK.

Belongs to the gas vesicle GvpG family. In terms of assembly, gvpF to GvpM interact with each other in vitro, and may form multi-subunit complex(es). Might interact with GvpA1.

The protein resides in the gas vesicle. In terms of biological role, proteins GvpF to GvpM might be involved in nucleating gas vesicle formation. A minor component of the gas vesicle. Gas vesicles are hollow, gas filled proteinaceous nanostructures found in several microbial planktonic microorganisms. They allow positioning of halobacteria at the optimal depth for growth in the poorly aerated, shallow brine pools of their habitat. Functionally, expression of a 9.5 kb p-vac DNA fragment containing 2 divergently transcribed regions (gvpD-gvpE-gvpF-gvpG-gvpH-gvpI-gvpJ-gvpK-gvpL-gvpM and gvpA-gvpC-gvpN-gvpO) allows H.volcanii to produce gas vesicles. A minimal gas vesicle can be made in H.volcanii by gvpA1-gvpO1 plus gvpF1-gvpG1-gvpJ1-gvpK1-gvpL1-gvpM1; lack of enough GvpJ1 prevents formation. A similar region restores gas vesicle production in H.halobium without the p-vac locus, but it still has the c-vac locus. The sequence is that of Gas vesicle protein G1 (gvpG11) from Halobacterium salinarum (strain ATCC 700922 / JCM 11081 / NRC-1) (Halobacterium halobium).